We begin with the raw amino-acid sequence, 334 residues long: Fructose-1,6-bisphosphatase class 1 (334 aa).

Residues Glu93, Asp117, Leu119, and Asp120 each contribute to the Mg(2+) site. Substrate contacts are provided by residues 120–123 (DGSS), Asn213, Tyr244, and Lys274. Glu280 contacts Mg(2+).

It belongs to the FBPase class 1 family. Homotetramer. Mg(2+) is required as a cofactor.

The protein localises to the cytoplasm. The catalysed reaction is beta-D-fructose 1,6-bisphosphate + H2O = beta-D-fructose 6-phosphate + phosphate. Its pathway is carbohydrate biosynthesis; gluconeogenesis. The polypeptide is Fructose-1,6-bisphosphatase class 1 (Flavobacterium johnsoniae (strain ATCC 17061 / DSM 2064 / JCM 8514 / BCRC 14874 / CCUG 350202 / NBRC 14942 / NCIMB 11054 / UW101) (Cytophaga johnsonae)).